The primary structure comprises 342 residues: Ketol-acid reductoisomerase (NADP(+)) (342 aa).

The KARI N-terminal Rossmann domain maps to 2–181 (VKVYYNGDIQ…GGARAGVLET (180 aa)). NADP(+)-binding positions include 25–28 (YGSQ), R48, S52, and 82–85 (DEQQ). Residue H107 is part of the active site. Residue G133 participates in NADP(+) binding. Positions 182–327 (TFKEETETDL…RKLREMMPFV (146 aa)) constitute a KARI C-terminal knotted domain. Mg(2+) is bound by residues D190, E194, E226, and E230. S251 contributes to the substrate binding site.

It belongs to the ketol-acid reductoisomerase family. Mg(2+) serves as cofactor.

The enzyme catalyses (2R)-2,3-dihydroxy-3-methylbutanoate + NADP(+) = (2S)-2-acetolactate + NADPH + H(+). It catalyses the reaction (2R,3R)-2,3-dihydroxy-3-methylpentanoate + NADP(+) = (S)-2-ethyl-2-hydroxy-3-oxobutanoate + NADPH + H(+). Its pathway is amino-acid biosynthesis; L-isoleucine biosynthesis; L-isoleucine from 2-oxobutanoate: step 2/4. The protein operates within amino-acid biosynthesis; L-valine biosynthesis; L-valine from pyruvate: step 2/4. Involved in the biosynthesis of branched-chain amino acids (BCAA). Catalyzes an alkyl-migration followed by a ketol-acid reduction of (S)-2-acetolactate (S2AL) to yield (R)-2,3-dihydroxy-isovalerate. In the isomerase reaction, S2AL is rearranged via a Mg-dependent methyl migration to produce 3-hydroxy-3-methyl-2-ketobutyrate (HMKB). In the reductase reaction, this 2-ketoacid undergoes a metal-dependent reduction by NADPH to yield (R)-2,3-dihydroxy-isovalerate. The protein is Ketol-acid reductoisomerase (NADP(+)) of Bacillus pumilus (strain SAFR-032).